We begin with the raw amino-acid sequence, 586 residues long: Probable transporter AQR1 (586 aa).

2 disordered regions span residues 1 to 44 (MSRS…FEGA) and 61 to 82 (EGDL…PTQQ). Residues 1-99 (MSRSNSIYTE…PYTLLSYGQK (99 aa)) lie on the Extracellular side of the membrane. Residues 19-40 (NEQHLTREYTKPDGQTKSEKLN) are compositionally biased toward basic and acidic residues. The chain crosses the membrane as a helical span at residues 100 to 120 (WGMVAILTMCGFWSSLGSPIY). The Cytoplasmic segment spans residues 121–139 (YPALRQLEKQFNVDENMVN). A helical membrane pass occupies residues 140-160 (VTVVVYLLFQGISPTVSGGLA). Over 161 to 166 (DCFGRR) the chain is Extracellular. A helical transmembrane segment spans residues 167 to 187 (PIILAGMLIYVIASIGLACAP). Position 188 (Ser-188) is a topological domain, cytoplasmic. The chain crosses the membrane as a helical span at residues 189–209 (YGVIIFLRCIQSIGISPTIAI). At 210–225 (SSGVVGDFTLKHERGT) the chain is on the extracellular side. A helical transmembrane segment spans residues 226–246 (FVGATSGFVLLGQCFGSLIGA). The Cytoplasmic portion of the chain corresponds to 247-255 (VLTARWDWR). Residues 256 to 276 (AIFWFLTIGCGSCFLIAFLIL) form a helical membrane-spanning segment. The Extracellular segment spans residues 277 to 334 (PETKRTIAGNLSIKPKRFINRAPIFLLGPVRRRFKYDNPDYETLDPTIPKLDLSSAGK). Residues 335–355 (ILVLPEIILSLFPSGLLFAMW) traverse the membrane as a helical segment. The Cytoplasmic segment spans residues 356–374 (TLMLSSISSGLSVAPYNYH). The helical transmembrane segment at 375-395 (LVIIGVCYLPGGIGGLMGSFF) threads the bilayer. Residues 396 to 433 (TGRIIDMYFKRKIKKFEQDKANGLIPQDAEINMFKVRL) are Extracellular-facing. Residues 434–454 (VCLLPQNFLAVVAYLLFGWSI) traverse the membrane as a helical segment. The Cytoplasmic portion of the chain corresponds to 455–459 (DKGWR). The helical transmembrane segment at 460-480 (IESILITSFVCSYCAMSTLST) threads the bilayer. Residues 481 to 523 (STTLLVDLYPTKSSTASSCFNFVRCSLSTIFMGCFAKMKAAMT) lie on the Extracellular side of the membrane. The chain crosses the membrane as a helical span at residues 524–544 (VGGTFTFLCALVFFFNFLMFI). Residues 545–586 (PMKYGMKWREDRLLKQQRQSWLNTLAVKAKKGTKRDQNDNHN) are Cytoplasmic-facing.

It belongs to the major facilitator superfamily. CAR1 family.

It localises to the membrane. Functionally, probable transporter that confers resistance to short-chain monocarboxylic acids and quinidine. This is Probable transporter AQR1 (AQR1) from Saccharomyces cerevisiae (strain ATCC 204508 / S288c) (Baker's yeast).